The following is a 287-amino-acid chain: MENNSSNAAYLRSERVEYELTNDSTDVKLSFPSLLDNKISLLKGHCCKIDHIVLEYRNQVPINATGHVIIEIHDQRLHDGDSKQAEFTIPVQCNCNLHYYSSSFSTMKDINPWRVMYRVVDTNVINGVHFCRIQGKLKLVNCKRSPNDIQFRSPKIEILSKAFTERDIDFWSVGRKAQQRKLVQGPSLIGSRSMRYAPCSIGPNESWAVRSELGLHEPWAVKERGWASIERPYNQLNRLNPDALDPGKSVSQVGSDQFTREDLNDIISKTVNICLNTSMQSHVSKNV.

This sequence belongs to the begomovirus movement protein BC1 family. Binds to dimeric supercoiled plasmid DNA. Phosphorylated.

The protein localises to the host cell membrane. Its subcellular location is the host microsome membrane. The protein resides in the host endoplasmic reticulum membrane. Its function is as follows. Transports viral genome to neighboring plant cells directly through plasmosdesmata, without any budding. The movement protein allows efficient cell to cell propagation, by bypassing the host cell wall barrier. Begomovirus genome is shuttled out of nucleus by Nuclear shuttle protein (NSP) and the movement protein transports the DNA-NSP complex to cell plasmodesmata and facilitates further movement across the cell wall. In Manihot esculenta (Cassava), this protein is Movement protein BC1.